A 1070-amino-acid chain; its full sequence is Alpha-glucosidase (1070 aa).

Residues 1 to 35 (MRSIKAASLTPLLAALFTTLSSTLALPSSVWEHQL) form the signal peptide. 9 N-linked (GlcNAc...) asparagine glycosylation sites follow: asparagine 48, asparagine 99, asparagine 144, asparagine 161, asparagine 208, asparagine 384, asparagine 458, asparagine 480, and asparagine 513. Aspartate 526 serves as the catalytic Nucleophile. The active site involves glutamate 529. N-linked (GlcNAc...) asparagine glycosylation is found at asparagine 544, asparagine 566, asparagine 574, asparagine 578, and asparagine 635. Aspartate 730 serves as the catalytic Proton donor. N-linked (GlcNAc...) asparagine glycosylation is found at asparagine 818, asparagine 885, asparagine 916, asparagine 983, asparagine 992, asparagine 996, asparagine 1008, asparagine 1029, asparagine 1043, and asparagine 1052.

Belongs to the glycosyl hydrolase 31 family.

The catalysed reaction is Hydrolysis of terminal, non-reducing (1-&gt;4)-linked alpha-D-glucose residues with release of alpha-D-glucose.. Functionally, hydrolyzes a broad range of alpha-D-linked glucopyranosides, including maltose (alpha-1,4), sucrose (alpha-1,2), isomaltose (alpha-1,6) and turanose (alpha-1,3). This is Alpha-glucosidase from Candida tsukubaensis (Yeast).